Consider the following 700-residue polypeptide: MARDVLTDLTKVRNIGIMAHIDAGKTTTTERILYYTGITYKIGEVHDGAATMDWMEEEQKRGITITSAATTTFWGDNQINIIDTPGHVDFTVEVERSLRVLDGAVAVFDGKEGVEPQSEQVWRQADKYEVPRICFVNKMDKLGADFYYTVRTIEERLAAKPLVLQLPIGSESDFQGVVDLVRMKALTWRGEVKKGEDYAVEDIPAELADEAAKYREQLVEAVAETDEALMEAYFGGEELTEEQIKNGIRKLTINREAFPVLCGTAFKNKGVQPMLDAVVDYLPSPLDVPPVQGLLPDGETAAERKPSTQEPFAALVSKISVHPFFGKLTYVRVYSGKVSSGTQVINSTKERKERIGKMFQMHSNKENPVDEIQAGHIYAVIGLKDTTTGDTLCDPQNPIVLESMTFPAPVIEVAIEPKTKADQEKLSTAIQKLAEEDPTFQVKLDDETGQTIIKGMGELHLEVLVNRMKSDFKVEANIGKPQVAYRETIRKTVEKYEYTHKKQTGGSGQFARVIISLEPIEQSADSATYEFENKVTGGRVPREYIPSVDQGAQDAMQYGVLAGYPLVGIKVTLLDGQYHEVDSSEMAFKIAGSIAMKEAAAKASPALLEPIMAVEVTTPEDYMGDVIGDLNSRRGHIQAMEERSGVRVVKAQVPLSEMFGYVGDLRSKTQGRANYSMVFDSYAEVPANVAKEIIAKATGE.

In terms of domain architecture, tr-type G spans 10-286; that stretch reads TKVRNIGIMA…AVVDYLPSPL (277 aa). GTP-binding positions include 19-26, 83-87, and 137-140; these read AHIDAGKT, DTPGH, and NKMD.

This sequence belongs to the TRAFAC class translation factor GTPase superfamily. Classic translation factor GTPase family. EF-G/EF-2 subfamily.

The protein localises to the cytoplasm. Functionally, catalyzes the GTP-dependent ribosomal translocation step during translation elongation. During this step, the ribosome changes from the pre-translocational (PRE) to the post-translocational (POST) state as the newly formed A-site-bound peptidyl-tRNA and P-site-bound deacylated tRNA move to the P and E sites, respectively. Catalyzes the coordinated movement of the two tRNA molecules, the mRNA and conformational changes in the ribosome. The sequence is that of Elongation factor G from Saccharopolyspora erythraea (strain ATCC 11635 / DSM 40517 / JCM 4748 / NBRC 13426 / NCIMB 8594 / NRRL 2338).